The chain runs to 189 residues: Thymidine kinase (189 aa).

ATP is bound by residues 9–16 and 85–88; these read GTMNSGKT and DESQ. Glu-86 acts as the Proton acceptor in catalysis. Residues Cys-143, Cys-146, Cys-180, and His-183 each coordinate Zn(2+).

The protein belongs to the thymidine kinase family. Homotetramer.

Its subcellular location is the cytoplasm. It catalyses the reaction thymidine + ATP = dTMP + ADP + H(+). This Streptococcus pyogenes serotype M1 protein is Thymidine kinase.